We begin with the raw amino-acid sequence, 527 residues long: Catalase (527 aa).

Over residues M1–Q22 the composition is skewed to basic and acidic residues. The segment at M1–L42 is disordered. A2 bears the Blocked amino end (Ala); alternate mark. A2 carries the N-acetylalanine; alternate modification. The residue at position 9 (S9) is a Phosphoserine. K13 carries the post-translational modification N6-succinyllysine. Active-site residues include H75 and N148. The NADP(+) site is built by H194, F198, S201, R203, N213, and Y215. An N6-succinyllysine modification is found at K221. Position 233 is an N6-acetyllysine (K233). NADP(+) contacts are provided by K237, W303, and H305. Y358 contacts heme. S417 and S434 each carry phosphoserine. Residues Q442, T445, and F446 each coordinate NADP(+). An N6-acetyllysine; alternate mark is found at K449 and K480. Residues K449 and K480 each carry the N6-succinyllysine; alternate modification. K499 carries the post-translational modification N6-acetyllysine. T511 bears the Phosphothreonine mark. S517 carries the phosphoserine modification. The short motif at K524–L527 is the Microbody targeting signal; atypical element.

It belongs to the catalase family. In terms of assembly, homotetramer. Interacts (via microbody targeting signal) with PEX5, monomeric form interacts with PEX5, leading to its translocation into peroxisomes. It depends on heme as a cofactor. Requires NADP(+) as cofactor.

Its subcellular location is the peroxisome matrix. The enzyme catalyses 2 H2O2 = O2 + 2 H2O. Catalyzes the degradation of hydrogen peroxide (H(2)O(2)) generated by peroxisomal oxidases to water and oxygen, thereby protecting cells from the toxic effects of hydrogen peroxide. Promotes growth of cells including T-cells, B-cells, myeloid leukemia cells, melanoma cells, mastocytoma cells and normal and transformed fibroblast cells. The protein is Catalase (CAT) of Bos taurus (Bovine).